Consider the following 592-residue polypeptide: Inactive glycosyltransferase 25 family member 3 (592 aa).

Residues 1–19 form the signal peptide; the sequence is MHVARLLPLLLLLGQQLRA. 4 N-linked (GlcNAc...) asparagine glycosylation sites follow: Asn72, Asn150, Asn234, and Asn357. Residues 540-592 are disordered; sequence AEWLSDTETSSPWDDDSGRLISQTGSQKALRGPHLHLTGSSGHSLHPHHRDEL. A Prevents secretion from ER motif is present at residues 589-592; sequence RDEL.

This sequence belongs to the glycosyltransferase 25 family.

The protein localises to the endoplasmic reticulum lumen. Functionally, probable cell adhesion protein involved in leukocyte transmigration across the blood-brain barrier. Does not express any beta-galactosyltransferase activity in vitro. The chain is Inactive glycosyltransferase 25 family member 3 (Cercam) from Mus musculus (Mouse).